The following is a 2766-amino-acid chain: Thyroglobulin (2766 aa).

Residues 1–20 (MTALVLWVSTLLSSVCLVAA) form the signal peptide. Tyr25 is subject to Iodotyrosine; alternate. At Tyr25 the chain carries Sulfotyrosine; alternate. Residue Tyr25 is modified to Thyroxine; alternate. Position 25 is a triiodothyronine; alternate (Tyr25). 4 consecutive Thyroglobulin type-1 domains span residues 32 to 93 (LRPC…PTVC), 94 to 161 (LSFC…PTRC), 162 to 298 (PRSC…RFRC), and 299 to 359 (PTKC…PPSC). 8 disulfide bridges follow: Cys35–Cys53, Cys64–Cys71, Cys73–Cys93, Cys97–Cys121, Cys132–Cys139, Cys141–Cys161, Cys165–Cys184, and Cys195–Cys236. Tyr109 carries the iodotyrosine modification. N-linked (GlcNAc...) asparagine glycosylation is present at Asn111. Tyr150 bears the Iodotyrosine; alternate mark. Diiodotyrosine; alternate is present on Tyr150. N-linked (GlcNAc...) asparagine glycosylation occurs at Asn199. Tyr235 and Tyr259 each carry iodotyrosine. Cystine bridges form between Cys302/Cys320, Cys331/Cys337, Cys339/Cys359, Cys365/Cys620, Cys408/Cys608, Cys631/Cys636, Cys638/Cys658, Cys662/Cys687, and Cys698/Cys703. N-linked (GlcNAc...) asparagine glycans are attached at residues Asn484 and Asn496. Thyroglobulin type-1 domains lie at 605–658 (AQAC…RPRC), 659–726 (PTKC…AKQC), 727–922 (PSVC…IPAC), 923–1074 (PGPC…MPQC), 1075–1146 (PTNC…SAQC), and 1147–1211 (PGLC…QPAC). Tyr704 bears the Iodotyrosine; alternate mark. Tyr704 carries the post-translational modification Thyroxine; alternate. Tyr704 is subject to Triiodothyronine; alternate. At Tyr704 the chain carries Diiodotyrosine; alternate. 16 disulfides stabilise this stretch: Cys705-Cys726, Cys730-Cys763, Cys774-Cys899, Cys901-Cys922, Cys926-Cys1032, Cys1043-Cys1050, Cys1052-Cys1074, Cys1078-Cys1109, Cys1127-Cys1146, Cys1150-Cys1170, Cys1182-Cys1189, Cys1191-Cys1211, Cys1216-Cys1265, Cys1232-Cys1246, Cys1306-Cys1356, and Cys1331-Cys1347. An N-linked (GlcNAc...) asparagine glycan is attached at Asn748. The residue at position 785 (Tyr785) is an Iodotyrosine. Residue Asn817 is glycosylated (N-linked (GlcNAc...) asparagine). Residue Tyr867 is modified to Iodotyrosine; alternate. Residue Tyr867 is modified to Diiodotyrosine; alternate. A Diiodotyrosine modification is found at Tyr884. N-linked (GlcNAc...) asparagine glycosylation occurs at Asn948. The residue at position 993 (Tyr993) is an Iodotyrosine; alternate. Residue Tyr993 is modified to Diiodotyrosine; alternate. Asn1141 carries an N-linked (GlcNAc...) asparagine glycan. Residue Tyr1310 is modified to Iodotyrosine. Tyr1310 is modified (thyroxine). Residues Asn1349 and Asn1365 are each glycosylated (N-linked (GlcNAc...) asparagine). Disulfide bonds link Cys1441–Cys1458, Cys1461–Cys1472, Cys1475–Cys1489, Cys1492–Cys1509, Cys1513–Cys1522, Cys1542–Cys1564, Cys1602–Cys1626, Cys1606–Cys1612, and Cys1638–Cys1661. Type II repeat units lie at residues 1455–1468 (ALGCVKCPEGSFSQ), 1469–1485 (DGRCTPCPAGTYQEQAG), and 1486–1502 (SSACIPCPRGRTTITTG). The 55-residue stretch at 1510–1564 (VTDCQKNEAGLQCDQNGQYQASQKNRDSGEVFCVDSEGRKLQWLQTEAGLSESQC) folds into the Thyroglobulin type-1 11 domain. One copy of the Type IIIA repeat lies at 1602–1722 (CLTDCANDEA…GANLTDTHTY (121 aa)). N-linked (GlcNAc...) asparagine glycans are attached at residues Asn1715, Asn1729, Asn1773, and Asn1864. 4 cysteine pairs are disulfide-bonded: Cys1723–Cys1748, Cys1727–Cys1733, Cys1732–Cys1834, and Cys1759–Cys1776. The Type IIIB repeat unit spans residues 1723–1889 (CLLACDNDSC…LFSAEQANLW (167 aa)). Disulfide bonds link Cys1890/Cys1916, Cys1894/Cys1901, Cys1925/Cys1936, Cys1993/Cys2021, Cys1997/Cys2003, Cys2002/Cys2073, and Cys2032/Cys2045. The stretch at 1890–1992 (CLSRCAQEPI…GKLISNGFFE (103 aa)) is one Type IIIA repeat. Asn1935 is a glycosylation site (N-linked (GlcNAc...) asparagine). Residues 1993–2125 (CERLCDRDPC…AATSNFSMAQ (133 aa)) form a Type IIIB repeat. A glycan (N-linked (GlcNAc...) asparagine) is linked at Asn2010. N-linked (GlcNAc...) asparagine glycosylation is present at Asn2120. The stretch at 2126 to 2183 (DFCLQQCSRHQDCLVTTLQIQPGVVRCVFYPDIQNCIHSLRSHTCWLLLHEEATYIYR) is one Type IIIA repeat. Cystine bridges form between Cys2128/Cys2152, Cys2132/Cys2138, and Cys2161/Cys2170. At Tyr2182 the chain carries Iodotyrosine. The segment at 2186-2766 (GIPLVQSDVT…LEPVPKSYSK (581 aa)) is cholinesterase-like (ChEL). Residue Asn2249 is glycosylated (N-linked (GlcNAc...) asparagine). A disulfide bridge connects residues Cys2263 and Cys2280. A glycan (N-linked (GlcNAc...) asparagine) is linked at Asn2294. A disulfide bond links Cys2441 and Cys2452. Tyr2539 is modified (thyroxine). Tyr2572 bears the Iodotyrosine; alternate mark. At Tyr2572 the chain carries Thyroxine; alternate. The residue at position 2572 (Tyr2572) is a Triiodothyronine; alternate. At Tyr2572 the chain carries Diiodotyrosine; alternate. Asn2581 carries N-linked (GlcNAc...) asparagine glycosylation. 2 positions are modified to iodotyrosine: Tyr2586 and Tyr2616. The cysteines at positions 2590 and 2714 are disulfide-linked. Tyr2696 is subject to Diiodotyrosine. The tract at residues 2729 to 2766 (GAKDAQLTKSEEEDLEVGPGLEEDLSGSLEPVPKSYSK) is disordered. A compositionally biased stretch (acidic residues) spans 2739–2753 (EEEDLEVGPGLEEDL). Tyr2764 carries the iodotyrosine; alternate modification. Tyr2764 carries the post-translational modification Thyroxine; alternate. The residue at position 2764 (Tyr2764) is a Triiodothyronine; alternate. Residue Tyr2764 is modified to Diiodotyrosine; alternate.

This sequence belongs to the type-B carboxylesterase/lipase family. As to quaternary structure, monomer. Homodimer (via ChEL region); occurs in the endoplasmic reticulum and is required for export to the Golgi apparatus. Homooligomer; disulfide-linked; stored in this form in the thyroid follicle lumen. Post-translationally, iodinated on tyrosine residues by TPO. There are 4 pairs of iodinated tyrosines used for coupling: acceptor Tyr-25 is coupled to donor Tyr-150 or Tyr-235, acceptor Tyr-2572 is coupled to donor Tyr-2539, acceptor Tyr-2764 in monomer 1 is coupled to donor Tyr-2764 in monomer 2 and acceptor Tyr-1310 in monomer 1 is coupled to donor Tyr-109 in monomer 2. In terms of processing, sulfated tyrosines are desulfated during iodination. Undergoes sequential proteolysis by cathepsins to release thyroxine (T4) and triiodothyronine (T3) hormones. In the thyroid follicle lumen, cross-linked TG (storage form) is solubilized by limited proteolysis mediated by cathepsins CTSB and/or CTSL. Partially cleaved TG is further processed by CTSK/cathepsin K and/or CTSL resulting in the release of T4. Following endocytosis, further processing occurs leading to the release of T3 and more T4 hormones. As to expression, specifically expressed in the thyroid gland.

The protein localises to the secreted. Acts as a substrate for the production of iodinated thyroid hormones thyroxine (T4) and triiodothyronine (T3). The synthesis of T3 and T4 involves iodination of selected tyrosine residues of TG/thyroglobulin followed by their oxidative coupling. Following TG re-internalization and lysosomal-mediated proteolysis, T3 and T4 are released from the polypeptide backbone leading to their secretion into the bloodstream. One dimer produces 7 thyroid hormone molecules. The chain is Thyroglobulin (Tg) from Mus musculus (Mouse).